A 40-amino-acid chain; its full sequence is Photosystem II reaction center protein J (40 aa).

The helical transmembrane segment at 8 to 28 threads the bilayer; that stretch reads IPLWLVALVAGTGVLVVVGLF.

This sequence belongs to the PsbJ family. PSII is composed of 1 copy each of membrane proteins PsbA, PsbB, PsbC, PsbD, PsbE, PsbF, PsbH, PsbI, PsbJ, PsbK, PsbL, PsbM, PsbT, PsbX, PsbY, PsbZ, Psb30/Ycf12, peripheral proteins PsbO, CyanoQ (PsbQ), PsbU, PsbV and a large number of cofactors. It forms dimeric complexes.

Its subcellular location is the cellular thylakoid membrane. Its function is as follows. One of the components of the core complex of photosystem II (PSII). PSII is a light-driven water:plastoquinone oxidoreductase that uses light energy to abstract electrons from H(2)O, generating O(2) and a proton gradient subsequently used for ATP formation. It consists of a core antenna complex that captures photons, and an electron transfer chain that converts photonic excitation into a charge separation. In Trichodesmium erythraeum (strain IMS101), this protein is Photosystem II reaction center protein J.